Consider the following 876-residue polypeptide: GRB2-associated and regulator of MAPK protein (876 aa).

Residues 9 to 318 (KDVKWSSASF…NLIKGEVWQD (310 aa)) form a CABIT region. The residue at position 451 (Tyr451) is a Phosphotyrosine. 2 disordered regions span residues 460–569 (SVKR…TLSY) and 708–741 (DRML…LSEP). Residues 461–471 (VKRSGQPLTRS) show a composition bias toward polar residues. The segment covering 532–549 (PPVPPRSSKPSSPTPSVP) has biased composition (pro residues). Over residues 556–569 (VRQQTRSPSPTLSY) the composition is skewed to polar residues. The 66-residue stretch at 811-876 (LSVEEVSKSL…QFINGWRPKM (66 aa)) folds into the SAM domain.

The protein belongs to the GAREM family.

Adapter protein that may provide a link between cell surface epidermal growth factor receptor and the MAPK/ERK signaling pathway. May promote cell proliferation. The sequence is that of GRB2-associated and regulator of MAPK protein (garem1) from Xenopus laevis (African clawed frog).